We begin with the raw amino-acid sequence, 960 residues long: Phosphoenolpyruvate carboxylase 3 (960 aa).

A Phosphoserine modification is found at Ser-8. Active-site residues include His-167 and Lys-597.

Belongs to the PEPCase type 1 family. As to quaternary structure, homotetramer. It depends on Mg(2+) as a cofactor.

The protein resides in the cytoplasm. It catalyses the reaction oxaloacetate + phosphate = phosphoenolpyruvate + hydrogencarbonate. Its pathway is photosynthesis; C4 acid pathway. By light-reversible phosphorylation. Functionally, through the carboxylation of phosphoenolpyruvate (PEP) it forms oxaloacetate, a four-carbon dicarboxylic acid source for the tricarboxylic acid cycle. The sequence is that of Phosphoenolpyruvate carboxylase 3 from Sorghum bicolor (Sorghum).